Consider the following 345-residue polypeptide: MAGLDREKALDNALAQIDKQFGKGSVMRLGDDTRPPVQAIPTGSIALDVALGIGGLPRGRIIEIYGPESSGKTTVALHAVANAQAAGGIAAFIDAEHALDPEYAGKLGVDTDGLLVSQPDTGEQALEIADMLVRSGALDIIVIDSVAALVPRAEIEGEMGDSHVGLQARLMSQALRKMTAALANSGTTAIFINQLREKIGVMFGSPETTTGGKALKFYASVRLDVRRIETLKDGTEAVGNRTRVKVVKNKVAPPFRTAEFDIVYGGGISREGSLIDMGVEHGIIRKSGAWYTYDGDQLGQGKENARSFLRDNPDLANEIEKKIKEKLGILPSLESDAVAPVPVDL.

Residue 66 to 73 (GPESSGKT) participates in ATP binding.

The protein belongs to the RecA family.

It is found in the cytoplasm. Functionally, can catalyze the hydrolysis of ATP in the presence of single-stranded DNA, the ATP-dependent uptake of single-stranded DNA by duplex DNA, and the ATP-dependent hybridization of homologous single-stranded DNAs. It interacts with LexA causing its activation and leading to its autocatalytic cleavage. This chain is Protein RecA, found in Frankia casuarinae (strain DSM 45818 / CECT 9043 / HFP020203 / CcI3).